A 927-amino-acid chain; its full sequence is Sodium/calcium exchanger 3 (927 aa).

The N-terminal stretch at 1 to 30 (MAWLRLQPLTSAFLHFGLVTFVLFLNGLRA) is a signal peptide. Residues 31-73 (EAGGSGDVPSTGQNNESCSGSSDCKEGVILPIWYPENPSLGDK) are Extracellular-facing. N45 carries an N-linked (GlcNAc...) asparagine glycan. Residues 74–94 (IARVIVYFVALIYMFLGVSII) form a helical membrane-spanning segment. Residues 95–147 (ADRFMASIEVITSQEREVTIKKPNGETSTTTIRVWNETVSNLTLMALGSSAPE) lie on the Cytoplasmic side of the membrane. The Alpha-1 repeat unit spans residues 140–180 (ALGSSAPEILLSLIEVCGHGFIAGDLGPSTIVGSAAFNMFI). Residues 148 to 168 (ILLSLIEVCGHGFIAGDLGPS) form a helical membrane-spanning segment. A topological domain (extracellular) is located at residue T169. A helical membrane pass occupies residues 170 to 190 (IVGSAAFNMFIIIGICVYVIP). Residues 191-202 (DGETRKIKHLRV) are Cytoplasmic-facing. Residues 203-223 (FFITAAWSIFAYIWLYMILAV) form a helical membrane-spanning segment. The Extracellular segment spans residues 224 to 230 (FSPGVVQ). The helical transmembrane segment at 231–251 (VWEGLLTLFFFPVCVLLAWVA) threads the bilayer. Residues 252–726 (DKRLLFYKYM…DESGEERLPS (475 aa)) are Cytoplasmic-facing. The putative calmodulin-binding region stretch occupies residues 253 to 272 (KRLLFYKYMHKKYRTDKHRG). 2 consecutive Calx-beta domains span residues 386 to 485 (VHTD…VRLS) and 519 to 619 (ATVT…IALG). Positions 409, 445, 470, 471, 473, 475, 478, 525, 526, 527, 543, 579, 606, 607, and 672 each coordinate Ca(2+). A helical transmembrane segment spans residues 727 to 747 (CFDYVMHFLTVFWKVLFACVP). Residues 748–754 (PTEYCHG) lie on the Extracellular side of the membrane. The chain crosses the membrane as a helical span at residues 755–775 (WACFAVSILIIGMLTAIIGDL). At 776–778 (ASH) the chain is on the cytoplasmic side. Residues 779–799 (FGCTIGLKDSVTAVVFVAFGT) traverse the membrane as a helical segment. One copy of the Alpha-2 repeat lies at 796–832 (AFGTSVPDTFASKAAALQDVYADASIGNVTGSNAVNV). Topologically, residues 800–828 (SVPDTFASKAAALQDVYADASIGNVTGSN) are extracellular. The N-linked (GlcNAc...) asparagine glycan is linked to N823. A helical transmembrane segment spans residues 829 to 849 (AVNVFLGIGLAWSVAAIYWAL). Topologically, residues 850–860 (QGQEFHVSAGT) are cytoplasmic. The helical transmembrane segment at 861–881 (LAFSVTLFTIFAFVCISVLLY) threads the bilayer. The Extracellular segment spans residues 882 to 903 (RRRPHLGGELGGPRGCKLATTW). The helical transmembrane segment at 904–924 (LFVSLWLLYILFATLEAYCYI) threads the bilayer. Residues 925 to 927 (KGF) lie on the Cytoplasmic side of the membrane.

Belongs to the Ca(2+):cation antiporter (CaCA) (TC 2.A.19) family. SLC8 subfamily. As to quaternary structure, interacts with AKAP1. Isoform 2 is expressed in brain and skeletal muscle. Isoform 3 is expressed in excitable cells of brain, retina and skeletal muscle. Isoform 4 is expressed in skeletal muscle.

Its subcellular location is the cell membrane. The protein resides in the perikaryon. The protein localises to the cell projection. It is found in the dendrite. It localises to the dendritic spine. Its subcellular location is the sarcolemma. The protein resides in the cytoplasm. The protein localises to the sarcoplasm. It is found in the cell junction. It localises to the mitochondrion outer membrane. Its subcellular location is the perinuclear region. The protein resides in the endoplasmic reticulum membrane. The enzyme catalyses Ca(2+)(in) + 3 Na(+)(out) = Ca(2+)(out) + 3 Na(+)(in). With respect to regulation, calcium transport is down-regulated by Na(+) and stimulated by Ca(2+). Functionally, mediates the electrogenic exchange of Ca(2+) against Na(+) ions across the cell membrane, and thereby contributes to the regulation of cytoplasmic Ca(2+) levels and Ca(2+)-dependent cellular processes. Contributes to cellular Ca(2+) homeostasis in excitable cells, both in muscle and in brain. In a first phase, voltage-gated channels mediate the rapid increase of cytoplasmic Ca(2+) levels due to release of Ca(2+) stores from the endoplasmic reticulum. SLC8A3 mediates the export of Ca(2+) from the cell during the next phase, so that cytoplasmic Ca(2+) levels rapidly return to baseline. Contributes to Ca(2+) transport during excitation-contraction coupling in muscle. In neurons, contributes to the rapid decrease of cytoplasmic Ca(2+) levels back to baseline after neuronal activation, and thereby contributes to modulate synaptic plasticity, learning and memory. Required for normal oligodendrocyte differentiation and for normal myelination. Mediates Ca(2+) efflux from mitochondria and contributes to mitochondrial Ca(2+) ion homeostasis. This is Sodium/calcium exchanger 3 (SLC8A3) from Homo sapiens (Human).